We begin with the raw amino-acid sequence, 172 residues long: Protein-export protein SecB (172 aa).

The segment at 152–172 is disordered; it reads AQGAEGGNSGIVMPDGSQARH.

Belongs to the SecB family. Homotetramer, a dimer of dimers. One homotetramer interacts with 1 SecA dimer.

The protein localises to the cytoplasm. One of the proteins required for the normal export of preproteins out of the cell cytoplasm. It is a molecular chaperone that binds to a subset of precursor proteins, maintaining them in a translocation-competent state. It also specifically binds to its receptor SecA. The polypeptide is Protein-export protein SecB (Cupriavidus necator (strain ATCC 17699 / DSM 428 / KCTC 22496 / NCIMB 10442 / H16 / Stanier 337) (Ralstonia eutropha)).